Reading from the N-terminus, the 794-residue chain is Sucrose synthase (794 aa).

The segment at 263 to 742 (MISRLLILSP…ALDRVASRYT (480 aa)) is GT-B glycosyltransferase.

This sequence belongs to the glycosyltransferase 1 family. In terms of assembly, homotetramer.

It carries out the reaction an NDP-alpha-D-glucose + D-fructose = a ribonucleoside 5'-diphosphate + sucrose + H(+). The catalysed reaction is ADP-alpha-D-glucose + D-fructose = sucrose + ADP + H(+). Inhibited by GDP over 10 mM and by over 2 mM MgCl(2). Its function is as follows. Catalyzes the reversible conversion of sucrose and a nucleotide disphosphate (NDP) into fructose and NDP-glucose; although the reaction is freely reversible in vitro, the physiological reaction seems to be sucrose cleavage. Unlike characterized plant enzymes prefers ADP as a cosubstrate, whereas plants prefer UDP. The KM for sucrose is 8-fold lower in the presence of ADP than UDP. Its preference for ADP over UDP suggests it may directly link sucrose and glycogen metabolism. In Nitrosomonas europaea (strain ATCC 19718 / CIP 103999 / KCTC 2705 / NBRC 14298), this protein is Sucrose synthase (ss2).